The chain runs to 422 residues: Tyrosine--tRNA ligase (422 aa).

Tyr-36 contacts L-tyrosine. A 'HIGH' region motif is present at residues 41 to 50; sequence PTAGSLHIGH. Tyr-174 and Gln-178 together coordinate L-tyrosine. The 'KMSKS' region motif lies at 234–238; it reads KFGKT. An ATP-binding site is contributed by Lys-237. The region spanning 356-420 is the S4 RNA-binding domain; it reads TDLVTLLVES…GKKQYRLVTW (65 aa).

Belongs to the class-I aminoacyl-tRNA synthetase family. TyrS type 1 subfamily. In terms of assembly, homodimer.

The protein resides in the cytoplasm. It catalyses the reaction tRNA(Tyr) + L-tyrosine + ATP = L-tyrosyl-tRNA(Tyr) + AMP + diphosphate + H(+). In terms of biological role, catalyzes the attachment of tyrosine to tRNA(Tyr) in a two-step reaction: tyrosine is first activated by ATP to form Tyr-AMP and then transferred to the acceptor end of tRNA(Tyr). In Aeromonas hydrophila subsp. hydrophila (strain ATCC 7966 / DSM 30187 / BCRC 13018 / CCUG 14551 / JCM 1027 / KCTC 2358 / NCIMB 9240 / NCTC 8049), this protein is Tyrosine--tRNA ligase.